The primary structure comprises 497 residues: Glycerol kinase (497 aa).

Threonine 13 lines the ADP pocket. Residues threonine 13, threonine 14, and serine 15 each contribute to the ATP site. Sn-glycerol 3-phosphate is bound at residue threonine 13. An ADP-binding site is contributed by arginine 17. Arginine 83, glutamate 84, and tyrosine 135 together coordinate sn-glycerol 3-phosphate. The glycerol site is built by arginine 83, glutamate 84, and tyrosine 135. At histidine 231 the chain carries Phosphohistidine; by HPr. Aspartate 245 lines the sn-glycerol 3-phosphate pocket. Positions 245 and 246 each coordinate glycerol. ADP-binding residues include threonine 267 and glycine 310. 4 residues coordinate ATP: threonine 267, glycine 310, glutamine 314, and glycine 411. The ADP site is built by glycine 411 and asparagine 415.

It belongs to the FGGY kinase family. Homotetramer and homodimer (in equilibrium). In terms of processing, the phosphoenolpyruvate-dependent sugar phosphotransferase system (PTS), including enzyme I, and histidine-containing protein (HPr) are required for the phosphorylation, which leads to the activation of the enzyme.

The enzyme catalyses glycerol + ATP = sn-glycerol 3-phosphate + ADP + H(+). It functions in the pathway polyol metabolism; glycerol degradation via glycerol kinase pathway; sn-glycerol 3-phosphate from glycerol: step 1/1. Activated by phosphorylation and inhibited by fructose 1,6-bisphosphate (FBP). Functionally, key enzyme in the regulation of glycerol uptake and metabolism. Catalyzes the phosphorylation of glycerol to yield sn-glycerol 3-phosphate. The sequence is that of Glycerol kinase from Listeria monocytogenes serotype 4a (strain HCC23).